A 445-amino-acid polypeptide reads, in one-letter code: 2-oxoisovalerate dehydrogenase subunit alpha, mitochondrial (445 aa).

The N-terminal 45 residues, 1-45, are a transit peptide targeting the mitochondrion; that stretch reads MAVAIAAARVWRPNRGLSQAALLLLWRPGARGLARSHPHRQQQQF. Thiamine diphosphate is bound by residues tyrosine 158 and arginine 159. Serine 206 serves as a coordination point for K(+). Serine 207 serves as a coordination point for thiamine diphosphate. 3 residues coordinate K(+): proline 208, threonine 211, and glutamine 212. Residue glutamate 238 coordinates Mg(2+). The thiamine diphosphate site is built by glycine 239, alanine 240, and arginine 265. Mg(2+) contacts are provided by asparagine 267 and tyrosine 269. Histidine 336 is a binding site for thiamine diphosphate. A Phosphoserine; by BCKDK modification is found at serine 337. Threonine 338 is modified (phosphothreonine). A phosphoserine mark is found at serine 339 and serine 347. N6-acetyllysine; alternate is present on lysine 356. Residue lysine 356 is modified to N6-succinyllysine; alternate. At lysine 380 the chain carries N6-succinyllysine.

This sequence belongs to the BCKDHA family. As to quaternary structure, heterotetramer of 2 alpha/BCKDHA and 2 beta chains/BCKDHB that forms the branched-chain alpha-keto acid decarboxylase (E1) component of the BCKD complex. The branched-chain alpha-ketoacid dehydrogenase is a large complex composed of three major building blocks E1, E2 and E3. It is organized around E2, a 24-meric cubic core composed of DBT, to which are associated 6 to 12 copies of E1, and approximately 6 copies of the dehydrogenase E3, a DLD dimer. Interacts with PPM1K. Thiamine diphosphate serves as cofactor. It depends on Mg(2+) as a cofactor. In terms of processing, phosphorylated at Ser-337 by BCKDK and dephosphorylated by protein phosphatase PPM1K.

The protein resides in the mitochondrion matrix. It catalyses the reaction N(6)-[(R)-lipoyl]-L-lysyl-[protein] + 3-methyl-2-oxobutanoate + H(+) = N(6)-[(R)-S(8)-2-methylpropanoyldihydrolipoyl]-L-lysyl-[protein] + CO2. Functionally, together with BCKDHB forms the heterotetrameric E1 subunit of the mitochondrial branched-chain alpha-ketoacid dehydrogenase (BCKD) complex. The BCKD complex catalyzes the multi-step oxidative decarboxylation of alpha-ketoacids derived from the branched-chain amino-acids valine, leucine and isoleucine producing CO2 and acyl-CoA which is subsequently utilized to produce energy. The E1 subunit catalyzes the first step with the decarboxylation of the alpha-ketoacid forming an enzyme-product intermediate. A reductive acylation mediated by the lipoylamide cofactor of E2 extracts the acyl group from the E1 active site for the next step of the reaction. This Macaca fascicularis (Crab-eating macaque) protein is 2-oxoisovalerate dehydrogenase subunit alpha, mitochondrial (BCKDHA).